The following is a 341-amino-acid chain: Ribosomal RNA small subunit methyltransferase C (341 aa).

The protein belongs to the methyltransferase superfamily. RsmC family. As to quaternary structure, monomer.

Its subcellular location is the cytoplasm. It carries out the reaction guanosine(1207) in 16S rRNA + S-adenosyl-L-methionine = N(2)-methylguanosine(1207) in 16S rRNA + S-adenosyl-L-homocysteine + H(+). Specifically methylates the guanine in position 1207 of 16S rRNA in the 30S particle. This Shewanella halifaxensis (strain HAW-EB4) protein is Ribosomal RNA small subunit methyltransferase C.